The sequence spans 853 residues: Transcription factor macR (853 aa).

The zn(2)-C6 fungal-type DNA-binding region spans 18-45 (CIVCRRRKVRCGREQPECANCVRMKENC). 4 disordered regions span residues 54–122 (ESTG…PYPT), 138–166 (ANAPQINGSSTTTRDPSPAPSTSLFPTPS), 734–775 (ASDL…AGNK), and 833–853 (LGSQSTASGRRGLPDGLDFPG). Polar residues-rich tracts occupy residues 104–116 (PQVSANASPSPQR), 141–163 (PQINGSSTTTRDPSPAPSTSLFP), and 738–752 (RATSDQPSSDVSSTT).

It is found in the nucleus. Transcription factor that regulates the expression of the gene cluster that mediates the biosynthesis of macrophorins, isoprenoid epoxycyclohexenones containing cyclized drimane moieties. The protein is Transcription factor macR of Penicillium terrestre.